The following is a 191-amino-acid chain: Protein YceI (191 aa).

The first 22 residues, 1-22 (MKKNLLGFTFASLLFTTGSAVA), serve as a signal peptide directing secretion.

The protein belongs to the UPF0312 family. Type 1 subfamily.

The protein localises to the periplasm. The protein is Protein YceI of Salmonella agona (strain SL483).